Here is a 572-residue protein sequence, read N- to C-terminus: Bilirubin oxidase (572 aa).

Positions 1–19 (MFKHTLGAAALSLLFNSNA) are cleaved as a signal peptide. The propeptide occupies 20–38 (VQASPVPETSPATGHLFKR). Plastocyanin-like domains follow at residues 98–194 (VGYD…YMLT) and 404–526 (VAFA…VFVD). Residues His-132, His-134, His-172, His-174, His-436, His-439, His-441, His-494, Cys-495, His-496, His-500, and Met-505 each contribute to the Cu cation site. Residues Asn-510 and Asn-520 are each glycosylated (N-linked (GlcNAc...) asparagine).

The protein belongs to the multicopper oxidase family. It depends on Cu cation as a cofactor.

It carries out the reaction 2 (4Z,15Z)-bilirubin IXalpha + O2 = 2 biliverdin IXalpha + 2 H2O. Its function is as follows. Oxidation of bilirubin and other tetrapyrroles. The sequence is that of Bilirubin oxidase from Albifimbria verrucaria (Myrothecium leaf spot and pod blight fungus).